A 180-amino-acid polypeptide reads, in one-letter code: Small ribosomal subunit protein uS4 (180 aa).

The region spanning 104–166 is the S4 RNA-binding domain; it reads RRLQTIVHRK…PTSPFKNNPP (63 aa). A disordered region spans residues 155-180; the sequence is FYPTSPFKNNPPTAGQGEVNVEQKGN.

Belongs to the universal ribosomal protein uS4 family. In terms of assembly, part of the 30S ribosomal subunit. Contacts protein S5. The interaction surface between S4 and S5 is involved in control of translational fidelity.

In terms of biological role, one of the primary rRNA binding proteins, it binds directly to 16S rRNA where it nucleates assembly of the body of the 30S subunit. Functionally, with S5 and S12 plays an important role in translational accuracy. The polypeptide is Small ribosomal subunit protein uS4 (Metallosphaera sedula (strain ATCC 51363 / DSM 5348 / JCM 9185 / NBRC 15509 / TH2)).